The following is a 352-amino-acid chain: ADP-ribosylation factor GTPase-activating protein GCS1 (352 aa).

An Arf-GAP domain is found at 11–127 (RRRLLQLQKI…LTCLCEDRVF (117 aa)). The segment at 26–49 (CMDCGAPNPQWATPKFGAFICLEC) adopts a C4-type zinc-finger fold. Positions 138–151 (SKLSATSQTAASAT) are enriched in low complexity. Disordered regions lie at residues 138–181 (SKLS…ANFQ) and 196–231 (NQSRPDHLPPSQGGKYQGFGSTPAKPPQERSAGSSN). Thr-151 carries the phosphothreonine modification. Ser-157 is subject to Phosphoserine. Position 161 is a phosphothreonine (Thr-161). Phosphoserine is present on Ser-168. Polar residues predominate over residues 168–179 (SATPANSSNGAN). At Thr-170 the chain carries Phosphothreonine. Ser-260 is subject to Phosphoserine. The segment covering 315-330 (NGNAEDSSTAGNTTHT) has biased composition (polar residues). Residues 315 to 352 (NGNAEDSSTAGNTTHTEYQKIDNNDKKNEQDEDKWDDF) form a disordered region. The segment covering 331-343 (EYQKIDNNDKKNE) has biased composition (basic and acidic residues).

Its subcellular location is the cytoplasm. It is found in the mitochondrion. The protein resides in the perinuclear region. It localises to the golgi apparatus. In terms of biological role, GTPase-activating protein (GAP) for ARF1 and ARF2. Involved in intracellular vesicular transport. Required for transport from the trans-Golgi network. Implicated in the regulation of retrograde transport from the Golgi to the ER and in actin cytoskeletal organization. May be involved in the maintenance of mitochondrial morphology, possibly through organizing the actin cytoskeleton in Saccharomyces. This Saccharomyces cerevisiae (strain ATCC 204508 / S288c) (Baker's yeast) protein is ADP-ribosylation factor GTPase-activating protein GCS1 (GCS1).